We begin with the raw amino-acid sequence, 197 residues long: Guanylate kinase (197 aa).

A Guanylate kinase-like domain is found at 7-185 (GLIIILSSPS…TLKKIHEIIV (179 aa)). Residue 14-21 (SPSGTGKS) coordinates ATP.

It belongs to the guanylate kinase family.

Its subcellular location is the cytoplasm. It catalyses the reaction GMP + ATP = GDP + ADP. Essential for recycling GMP and indirectly, cGMP. The protein is Guanylate kinase (gmk) of Rickettsia prowazekii (strain Madrid E).